Here is a 212-residue protein sequence, read N- to C-terminus: Agglutinin isolectin 1 (212 aa).

Positions 1 to 26 (MKMMSTRALALGAAAVLAFAAATAQA) are cleaved as a signal peptide. Q27 bears the Pyrrolidone carboxylic acid mark. Chitin-binding type-1 domains follow at residues 27–68 (QRCG…ACWT), 69–111 (SKRC…PCRA), 112–154 (DIKC…ACST), and 155–197 (DKPC…GCDG). 16 disulfides stabilise this stretch: C29/C44, C38/C50, C43/C57, C61/C66, C72/C87, C81/C93, C86/C100, C104/C109, C115/C130, C124/C136, C129/C143, C147/C152, C158/C173, C167/C179, C172/C186, and C190/C195. Residue 36 to 38 (MEC) participates in substrate binding. Position 88 to 99 (88 to 99 (SQYGYCGFGAEY)) interacts with substrate. Residue 140 to 141 (SE) participates in substrate binding. Positions 198–212 (VFAEAITANSTLLQE) are excised as a propeptide.

As to quaternary structure, homodimer, u-shaped.

In terms of biological role, N-acetyl-D-glucosamine / N-acetyl-D-neuraminic acid binding lectin. The chain is Agglutinin isolectin 1 from Triticum aestivum (Wheat).